The sequence spans 211 residues: Peptide methionine sulfoxide reductase MsrA (211 aa).

The active site involves Cys52.

Belongs to the MsrA Met sulfoxide reductase family.

It catalyses the reaction L-methionyl-[protein] + [thioredoxin]-disulfide + H2O = L-methionyl-(S)-S-oxide-[protein] + [thioredoxin]-dithiol. The enzyme catalyses [thioredoxin]-disulfide + L-methionine + H2O = L-methionine (S)-S-oxide + [thioredoxin]-dithiol. Functionally, has an important function as a repair enzyme for proteins that have been inactivated by oxidation. Catalyzes the reversible oxidation-reduction of methionine sulfoxide in proteins to methionine. The polypeptide is Peptide methionine sulfoxide reductase MsrA (Klebsiella pneumoniae (strain 342)).